The sequence spans 156 residues: MPRRREVPKREILPDPKFGNQEVSKFMNVVMSSGKKSVAERIVYGAFEQITTKSGKDPLEVFSTALNNARPLVEVKSRRVGGANYQVPVEVRSSRRTALAMRWLKDAARKRGEKSMGARLAGELLDAAEGRGGAVKKREEVHRMAEANKAFSHFRF.

This sequence belongs to the universal ribosomal protein uS7 family. Part of the 30S ribosomal subunit. Contacts proteins S9 and S11.

One of the primary rRNA binding proteins, it binds directly to 16S rRNA where it nucleates assembly of the head domain of the 30S subunit. Is located at the subunit interface close to the decoding center, probably blocks exit of the E-site tRNA. The polypeptide is Small ribosomal subunit protein uS7 (Thiobacillus denitrificans (strain ATCC 25259 / T1)).